The sequence spans 336 residues: Anthranilate phosphoribosyltransferase (336 aa).

5-phospho-alpha-D-ribose 1-diphosphate-binding positions include G83, 86 to 87 (GD), T91, 93 to 96 (NIST), 111 to 119 (KHGNRSVSS), and S123. Residue G83 coordinates anthranilate. S95 is a Mg(2+) binding site. N114 is an anthranilate binding site. R169 serves as a coordination point for anthranilate. Positions 227 and 228 each coordinate Mg(2+).

The protein belongs to the anthranilate phosphoribosyltransferase family. As to quaternary structure, homodimer. Mg(2+) serves as cofactor.

It catalyses the reaction N-(5-phospho-beta-D-ribosyl)anthranilate + diphosphate = 5-phospho-alpha-D-ribose 1-diphosphate + anthranilate. It functions in the pathway amino-acid biosynthesis; L-tryptophan biosynthesis; L-tryptophan from chorismate: step 2/5. In terms of biological role, catalyzes the transfer of the phosphoribosyl group of 5-phosphorylribose-1-pyrophosphate (PRPP) to anthranilate to yield N-(5'-phosphoribosyl)-anthranilate (PRA). The sequence is that of Anthranilate phosphoribosyltransferase from Vibrio campbellii (strain ATCC BAA-1116).